The sequence spans 409 residues: MHWGVGFASSRPCVVDLSWNQSISFFGWWAGSEEPFSFYGDIIAFPLQDYGGIMAGLGSDPWWKKTLYLTGGALLAAAAYLLHELLVIRKQQELDSKDAIILHQFARPNNGVPSLSPFCLKMETYLRMADLPYQNYFGGKLSAQGKMPWIEYNNEKVSGTEFIIDFLEEKLGVNLNKNLGPHERAVSRAVTKMVEEHFYWTLAYCQWVDNLNETRKMLSLSGGGPFSNLLRWVVCHITKGIVKREMHGHGIGRFSEEEIYMLMEKDMRSLAGLLGDKKYIMGPKLSTLDATVFGHLAQAMWTLPGTRPERLIKGELINLAMYCERIRRKFWPEWHHDDDNTIYESEESSEGSKTHTPMLDFSFYSRTETFEDEGAENSFSRTPDTDFTGHSLFDSDVDMDDYTEHEQCK.

Residues 68-88 (YLTGGALLAAAAYLLHELLVI) traverse the membrane as a helical segment. The tract at residues 372 to 409 (DEGAENSFSRTPDTDFTGHSLFDSDVDMDDYTEHEQCK) is disordered.

The protein belongs to the FAX family.

The protein resides in the membrane. In terms of biological role, may play a role in axonal development. The protein is Failed axon connections homolog (Faxc) of Rattus norvegicus (Rat).